The primary structure comprises 262 residues: MTAETHLQGVEISAAQFFEIWHHYDSDGNGYMDGKELQNFIQELQQARKKAGLDLTPEMKAFVDQYGKATDGKIGIVELAQVLPTEENFLLFFRCQQLKSSEDFMQTWRKYDSDHSGFIDSEELKSFLKDLLQKANKQIEDSKLTEYTEIMLRMFDANNDGKLELTELARLLPVQENFLIKFQGVKMCAKEFNKAFEMYDQDGNGYIDENELDALLKDLCEKNKKELDINNLATYKKSIMALSDGGKLYRAELALILCAEEN.

N-acetylthreonine is present on Thr-2. EF-hand domains lie at 12-47, 54-89, 99-134, 143-178, and 187-222; these read ISAA…LQQA, DLTP…EENF, KSSE…LLQK, KLTE…QENF, and MCAK…LCEK. Positions 25, 27, 29, 31, and 36 each coordinate Ca(2+). Ca(2+)-binding residues include Asp-112, Asp-114, Ser-116, Glu-123, Asp-156, Asn-158, Asp-160, Lys-162, Glu-167, Asp-200, Asp-202, Asn-204, Tyr-206, and Glu-211.

The protein belongs to the calbindin family. Highly abundant in supporting cells. Also present in hair cells.

In terms of biological role, buffers cytosolic calcium. May stimulate a membrane Ca(2+)-ATPase and a 3',5'-cyclic nucleotide phosphodiesterase. The polypeptide is Calbindin (CALB1) (Gallus gallus (Chicken)).